The chain runs to 334 residues: SH3 and cysteine-rich domain-containing protein 3 (334 aa).

The disordered stretch occupies residues 1 to 26 (MAQYDQLEDKDSLDIHDNPPAPENVV). The span at 7-17 (LEDKDSLDIHD) shows a compositional bias: basic and acidic residues. A Phorbol-ester/DAG-type zinc finger spans residues 62-113 (PHKFKDHYCKKPKFCDVCARMIVLNNKFALRCKNCKTNIHHSCQSYVQFQRC). Over residues 178 to 190 (EEEAQQPKEDEEG) the composition is skewed to acidic residues. A disordered region spans residues 178-215 (EEEAQQPKEDEEGAEGKQDGDKKDKTATDDKNKKQQQT). Positions 191–210 (AEGKQDGDKKDKTATDDKNK) are enriched in basic and acidic residues. 2 consecutive SH3 domains span residues 217–276 (SQSH…RVRA) and 277–334 (GERV…LHEL).

In terms of assembly, component of a calcium channel complex with CACNA1S. As to expression, expressed in muscles at the muscle triad.

It is found in the cytoplasm. Its subcellular location is the cell membrane. The protein resides in the sarcolemma. It localises to the T-tubule. Its function is as follows. Required for normal excitation-contraction coupling in skeletal muscle and for normal muscle contraction in response to membrane depolarization. Required for normal Ca(2+) release from the sarcplasmic reticulum, which ultimately leads to muscle contraction. Probably functions via its effects on muscle calcium channels. Increases CACNA1S channel activity, in addition to its role in enhancing the expression of CACNA1S at the cell membrane. Has a redundant role in promoting the expression of the calcium channel CACNA1S at the cell membrane. This chain is SH3 and cysteine-rich domain-containing protein 3, found in Danio rerio (Zebrafish).